A 559-amino-acid polypeptide reads, in one-letter code: Forkhead box protein O6 (559 aa).

2 disordered regions span residues 1 to 77 (MAAK…VGPL) and 163 to 183 (SWWMLNPEGGKTGKTPRRRAV). Residues 88–182 (WGNLSYADLI…KTGKTPRRRA (95 aa)) constitute a DNA-binding region (fork-head). S184 is modified (phosphoserine). 2 disordered regions span residues 197 to 232 (KASKKKQLHLPERSPDDSPPGAPVPGPLSASAKWAA) and 534 to 559 (NFDSALPPPPPGLAGAPPPNQSWVPG). Pro residues-rich tracts occupy residues 213-222 (DSPPGAPVPG) and 539-553 (LPPPPPGLAGAPPPN).

Post-translationally, phosphorylation of Ser-184 is be important in regulating the transacriptional activity. Expressed in brain in areas of the nucleus accumbens, cingulate cortex, parts of the amygdala and in the hippocampus.

It is found in the cytoplasm. It localises to the nucleus. In terms of biological role, transcriptional activator. This is Forkhead box protein O6 (Foxo6) from Mus musculus (Mouse).